The primary structure comprises 950 residues: Glycine dehydrogenase (decarboxylating) 1 (950 aa).

Lys-704 carries the N6-(pyridoxal phosphate)lysine modification.

The protein belongs to the GcvP family. As to quaternary structure, the glycine cleavage system is composed of four proteins: P, T, L and H. Pyridoxal 5'-phosphate serves as cofactor.

It carries out the reaction N(6)-[(R)-lipoyl]-L-lysyl-[glycine-cleavage complex H protein] + glycine + H(+) = N(6)-[(R)-S(8)-aminomethyldihydrolipoyl]-L-lysyl-[glycine-cleavage complex H protein] + CO2. Functionally, the glycine cleavage system catalyzes the degradation of glycine. The P protein binds the alpha-amino group of glycine through its pyridoxal phosphate cofactor; CO(2) is released and the remaining methylamine moiety is then transferred to the lipoamide cofactor of the H protein. In Pseudomonas fluorescens (strain Pf0-1), this protein is Glycine dehydrogenase (decarboxylating) 1.